A 397-amino-acid polypeptide reads, in one-letter code: Tryptophan synthase beta chain (397 aa).

K86 bears the N6-(pyridoxal phosphate)lysine mark.

This sequence belongs to the TrpB family. In terms of assembly, tetramer of two alpha and two beta chains. The cofactor is pyridoxal 5'-phosphate.

It catalyses the reaction (1S,2R)-1-C-(indol-3-yl)glycerol 3-phosphate + L-serine = D-glyceraldehyde 3-phosphate + L-tryptophan + H2O. It participates in amino-acid biosynthesis; L-tryptophan biosynthesis; L-tryptophan from chorismate: step 5/5. Its function is as follows. The beta subunit is responsible for the synthesis of L-tryptophan from indole and L-serine. In Aeromonas salmonicida (strain A449), this protein is Tryptophan synthase beta chain.